The following is a 784-amino-acid chain: ATP-dependent 6-phosphofructokinase, platelet type (784 aa).

M1 is modified (N-acetylmethionine). The interval 1–398 (MSDLDSSSSS…NLNTYKRLAI (398 aa)) is N-terminal catalytic PFK domain 1. Residues S2, S6, and S20 each carry the phosphoserine modification. ATP-binding positions include G33, 96-97 (RC), and 126-129 (GDGS). D127 lines the Mg(2+) pocket. The residue at position 141 (S141) is a Phosphoserine. Residues 172-174 (SID), R209, 216-218 (MGR), E272, R300, and 306-309 (HVQR) each bind substrate. D174 serves as the catalytic Proton acceptor. K394 is modified (N6-acetyllysine). The interdomain linker stretch occupies residues 399 to 410 (KLPDEKIVKSNC). The interval 411 to 784 (NVAVINVGAP…LESLQHHEEL (374 aa)) is C-terminal regulatory PFK domain 2. Position 480 (R480) interacts with beta-D-fructose 2,6-bisphosphate. K485 is subject to N6-acetyllysine. Beta-D-fructose 2,6-bisphosphate contacts are provided by residues 537-541 (TVSNN), R575, 582-584 (MGG), and E638. S539 carries an O-linked (GlcNAc) serine glycan. Y650 carries the post-translational modification Phosphotyrosine. Residues R664 and 670-673 (HMQQ) contribute to the beta-D-fructose 2,6-bisphosphate site. An N6-acetyllysine modification is found at K687. R743 is a binding site for beta-D-fructose 2,6-bisphosphate.

Belongs to the phosphofructokinase type A (PFKA) family. ATP-dependent PFK group I subfamily. Eukaryotic two domain clade 'E' sub-subfamily. As to quaternary structure, homo- and heterotetramers. Phosphofructokinase (PFK) enzyme functions as a tetramer composed of different combinations of 3 types of subunits, called PFKM (M), PFKL (L) and PFKP (P). The composition of the PFK tetramer differs according to the tissue type it is present in. The kinetic and regulatory properties of the tetrameric enzyme are dependent on the subunit composition, hence can vary across tissues. Interacts with ATG4B; promoting phosphorylation of ATG4B. Mg(2+) is required as a cofactor. Post-translationally, glcNAcylation decreases enzyme activity. As to expression, expression is constant during tumor growth and markedly decreases when cell proliferation stops.

Its subcellular location is the cytoplasm. The enzyme catalyses beta-D-fructose 6-phosphate + ATP = beta-D-fructose 1,6-bisphosphate + ADP + H(+). Its pathway is carbohydrate degradation; glycolysis; D-glyceraldehyde 3-phosphate and glycerone phosphate from D-glucose: step 3/4. With respect to regulation, allosterically activated by ADP, AMP, or fructose 2,6-bisphosphate, and allosterically inhibited by ATP or citrate. In terms of biological role, catalyzes the phosphorylation of D-fructose 6-phosphate to fructose 1,6-bisphosphate by ATP, the first committing step of glycolysis. The chain is ATP-dependent 6-phosphofructokinase, platelet type (Pfkp) from Mus musculus (Mouse).